The chain runs to 396 residues: Elongation factor Tu (396 aa).

Positions K10–E205 constitute a tr-type G domain. The interval G19 to T26 is G1. G19–T26 lines the GTP pocket. A Mg(2+)-binding site is contributed by T26. The interval G62–N66 is G2. A G3 region spans residues D83–G86. Residues D83 to H87 and N138 to D141 each bind GTP. Positions N138–D141 are G4. Positions S175–L177 are G5.

The protein belongs to the TRAFAC class translation factor GTPase superfamily. Classic translation factor GTPase family. EF-Tu/EF-1A subfamily. As to quaternary structure, monomer.

The protein resides in the cytoplasm. It carries out the reaction GTP + H2O = GDP + phosphate + H(+). Functionally, GTP hydrolase that promotes the GTP-dependent binding of aminoacyl-tRNA to the A-site of ribosomes during protein biosynthesis. This chain is Elongation factor Tu, found in Corynebacterium aurimucosum (strain ATCC 700975 / DSM 44827 / CIP 107346 / CN-1) (Corynebacterium nigricans).